Reading from the N-terminus, the 54-residue chain is Large ribosomal subunit protein bL33A (54 aa).

The protein belongs to the bacterial ribosomal protein bL33 family.

This chain is Large ribosomal subunit protein bL33A (rpmG1), found in Mycobacterium bovis (strain ATCC BAA-935 / AF2122/97).